A 202-amino-acid chain; its full sequence is Protein U22 (202 aa).

Helical transmembrane passes span 5 to 25 (GWSL…LHII) and 172 to 192 (FVYY…SCWF).

It is found in the host membrane. In Human herpesvirus 6B (strain Z29) (HHV-6 variant B), this protein is Protein U22 (U22).